A 195-amino-acid polypeptide reads, in one-letter code: Biogenesis of lysosome-related organelles complex 1 subunit 3 (195 aa).

A compositionally biased stretch (basic residues) spans 1–11 (MESSQGRRRRP). Residues 1–72 (MESSQGRRRR…PEPEPTVVPV (72 aa)) are disordered. Low complexity predominate over residues 25 to 51 (ELSASSSEEELYLGPSGPTRGRPTGLR). T59 carries the post-translational modification Phosphothreonine. S61 bears the Phosphoserine mark.

The protein belongs to the BLOC1S3 family. In terms of assembly, octamer composed of one copy each BLOC1S1, BLOC1S2, BLOC1S3, BLOC1S4, BLOC1S5, BLOC1S6, DTNBP1/BLOC1S7 and SNAPIN/BLOC1S8. Interacts directly with BLOC1S2. Component of the biogenesis of lysosome-related organelles complex 1 (BLOC-1) composed of BLOC1S1, BLOC1S2, BLOC1S3, BLOC1S4, BLOC1S5, BLOC1S6, DTNBP1/BLOC1S7 and SNAPIN/BLOC1S8. The BLOC-1 complex associates with the AP-3 protein complex and membrane protein cargos. Interacts with BLOC1S4, BLOC1S5 and BLOC1S6. Phosphorylated. As to expression, ubiquitously expressed.

The protein localises to the cytoplasm. Its function is as follows. Component of the BLOC-1 complex, a complex that is required for normal biogenesis of lysosome-related organelles (LRO), such as platelet dense granules and melanosomes. In concert with the AP-3 complex, the BLOC-1 complex is required to target membrane protein cargos into vesicles assembled at cell bodies for delivery into neurites and nerve terminals. The BLOC-1 complex, in association with SNARE proteins, is also proposed to be involved in neurite extension. Plays a role in intracellular vesicle trafficking. The sequence is that of Biogenesis of lysosome-related organelles complex 1 subunit 3 (Bloc1s3) from Mus musculus (Mouse).